The chain runs to 1044 residues: Translation initiation factor IF-2 (1044 aa).

Positions 31-425 are disordered; it reads VRSASSTVEP…RKSKRAKRQE (395 aa). 2 stretches are compositionally biased toward pro residues: residues 77 to 98 and 106 to 116; these read GPAPAARPQAPAPAQPAPPQPA and APAPAPAPRPA. Residues 117–148 show a composition bias toward low complexity; it reads EPAANPAPAAPPAFQAPAPAPAERPAAAQRPA. The segment covering 168–185 has biased composition (gly residues); the sequence is GGPGQGPRPGARPGGPGA. Over residues 204-247 the composition is skewed to basic and acidic residues; it reads GPGDRPERSERPDRGDRPQGDRPRSDRPQGERQQGDRPQGDRPG. Over residues 285 to 304 the composition is skewed to low complexity; the sequence is GGAPRPGNNPFASNQGMPRP. Over residues 305 to 328 the composition is skewed to pro residues; the sequence is QGGPRPTPAGPGGPRPGGPRPNPG. Residues 329-338 are compositionally biased toward low complexity; sequence MMPARPTVGR. Over residues 339-409 the composition is skewed to gly residues; it reads PGAGPGAGRP…GTQGAFGRAG (71 aa). Basic residues predominate over residues 413-422; it reads VRGRKSKRAK. Residues 537-709 enclose the tr-type G domain; it reads ARPPVVTVMG…VLLTADASLD (173 aa). Residues 546-553 are G1; it reads GHVDHGKT. 546–553 lines the GTP pocket; it reads GHVDHGKT. Positions 571-575 are G2; it reads GITQH. Residues 596–599 form a G3 region; it reads DTPG. GTP is bound by residues 596 to 600 and 650 to 653; these read DTPGH and NKVD. The tract at residues 650 to 653 is G4; the sequence is NKVD. Positions 686–688 are G5; the sequence is SAR.

The protein belongs to the TRAFAC class translation factor GTPase superfamily. Classic translation factor GTPase family. IF-2 subfamily.

The protein localises to the cytoplasm. One of the essential components for the initiation of protein synthesis. Protects formylmethionyl-tRNA from spontaneous hydrolysis and promotes its binding to the 30S ribosomal subunits. Also involved in the hydrolysis of GTP during the formation of the 70S ribosomal complex. This Kineococcus radiotolerans (strain ATCC BAA-149 / DSM 14245 / SRS30216) protein is Translation initiation factor IF-2.